A 318-amino-acid chain; its full sequence is Ribose-phosphate pyrophosphokinase 3 (318 aa).

Position 96–101 (96–101) interacts with ATP; sequence RQDKKD. Mg(2+) is bound by residues aspartate 128, histidine 130, aspartate 139, and aspartate 143. ATP is bound at residue histidine 130. Positions 212 to 227 are binding of phosphoribosylpyrophosphate; sequence NDRVAILVDDMADTCV.

The protein belongs to the ribose-phosphate pyrophosphokinase family. In terms of assembly, homodimer. The active form is probably a hexamer composed of 3 homodimers. Mg(2+) serves as cofactor. In terms of tissue distribution, testis.

It catalyses the reaction D-ribose 5-phosphate + ATP = 5-phospho-alpha-D-ribose 1-diphosphate + AMP + H(+). It participates in metabolic intermediate biosynthesis; 5-phospho-alpha-D-ribose 1-diphosphate biosynthesis; 5-phospho-alpha-D-ribose 1-diphosphate from D-ribose 5-phosphate (route I): step 1/1. Activated by magnesium and inorganic phosphate. Its function is as follows. Catalyzes the synthesis of phosphoribosylpyrophosphate (PRPP) that is essential for nucleotide synthesis. The sequence is that of Ribose-phosphate pyrophosphokinase 3 (PRPS1L1) from Homo sapiens (Human).